The primary structure comprises 502 residues: MAKEEKNLHVLEENFNQLIRERIQKFKNLQEQNKDPFEVYKVERTHTSKEIKDNYETLDGTDVTVAGRLMSKRVHGKAGFSDLYDRYGKIQLYIKINDVGEEKLKEYKSYDIGDILSVSGKVFKTRTGEVSIHITDFQLAAKSLKPLPEKWHGLKDPDLRYRQRYVDLIINQDVRDTFLKRTAVIRAIREFLDGRDYIEVETPILSSIAGGAAAKPFITHHNALDIDMYLRIATELYLKRLIVGGFEKVYEIGKNFRNEGIDVRHNPEFTAMELYEAFSDYNDMMELTENMLAYVCEKVLGTTKVIYQDTEIDFKPPWNRITMVDAVKQFTKVDFNEVESDDEARKIAVEKNIELKKELKDCTKGDILVGMFEEFCEHKFIQPTFVMDYPVEISPLTKKKRGNDKYTERFEGFIFGREVCNAYSELNDPIVQRERFMQQIRERELGDDEAYMMDEDFINALEIGMPPTGGLGIGLDRIIMFLTNSYSIRDVILFPTMKPSQQ.

Mg(2+) contacts are provided by E411 and E418.

The protein belongs to the class-II aminoacyl-tRNA synthetase family. In terms of assembly, homodimer. The cofactor is Mg(2+).

The protein localises to the cytoplasm. The enzyme catalyses tRNA(Lys) + L-lysine + ATP = L-lysyl-tRNA(Lys) + AMP + diphosphate. This is Lysine--tRNA ligase from Clostridium kluyveri (strain ATCC 8527 / DSM 555 / NBRC 12016 / NCIMB 10680 / K1).